We begin with the raw amino-acid sequence, 92 residues long: UPF0125 protein NMA1005 (92 aa).

This sequence belongs to the UPF0125 (RnfH) family.

The chain is UPF0125 protein NMA1005 from Neisseria meningitidis serogroup A / serotype 4A (strain DSM 15465 / Z2491).